Reading from the N-terminus, the 180-residue chain is Crossover junction endodeoxyribonuclease RuvC (180 aa).

Active-site residues include aspartate 7, glutamate 66, and aspartate 138. Residues aspartate 7, glutamate 66, and aspartate 138 each contribute to the Mg(2+) site.

This sequence belongs to the RuvC family. As to quaternary structure, homodimer which binds Holliday junction (HJ) DNA. The HJ becomes 2-fold symmetrical on binding to RuvC with unstacked arms; it has a different conformation from HJ DNA in complex with RuvA. In the full resolvosome a probable DNA-RuvA(4)-RuvB(12)-RuvC(2) complex forms which resolves the HJ. Mg(2+) serves as cofactor.

The protein resides in the cytoplasm. It carries out the reaction Endonucleolytic cleavage at a junction such as a reciprocal single-stranded crossover between two homologous DNA duplexes (Holliday junction).. Its function is as follows. The RuvA-RuvB-RuvC complex processes Holliday junction (HJ) DNA during genetic recombination and DNA repair. Endonuclease that resolves HJ intermediates. Cleaves cruciform DNA by making single-stranded nicks across the HJ at symmetrical positions within the homologous arms, yielding a 5'-phosphate and a 3'-hydroxyl group; requires a central core of homology in the junction. The consensus cleavage sequence is 5'-(A/T)TT(C/G)-3'. Cleavage occurs on the 3'-side of the TT dinucleotide at the point of strand exchange. HJ branch migration catalyzed by RuvA-RuvB allows RuvC to scan DNA until it finds its consensus sequence, where it cleaves and resolves the cruciform DNA. This Burkholderia pseudomallei (strain 668) protein is Crossover junction endodeoxyribonuclease RuvC.